The chain runs to 354 residues: tRNA-specific 2-thiouridylase MnmA (354 aa).

Residues 6–13 (LLSGGVDS) and leucine 33 each bind ATP. Cysteine 100 serves as the catalytic Nucleophile. Residues cysteine 100 and cysteine 195 are joined by a disulfide bond. Glycine 123 contributes to the ATP binding site. The interval 145–147 (KDQ) is interaction with tRNA. The active-site Cysteine persulfide intermediate is cysteine 195.

This sequence belongs to the MnmA/TRMU family.

It is found in the cytoplasm. The enzyme catalyses S-sulfanyl-L-cysteinyl-[protein] + uridine(34) in tRNA + AH2 + ATP = 2-thiouridine(34) in tRNA + L-cysteinyl-[protein] + A + AMP + diphosphate + H(+). Functionally, catalyzes the 2-thiolation of uridine at the wobble position (U34) of tRNA, leading to the formation of s(2)U34. This chain is tRNA-specific 2-thiouridylase MnmA, found in Borrelia turicatae (strain 91E135).